The sequence spans 221 residues: MVHYVKMEDGKVMPIQDMLKSIERYNPEHLKVIEAYVEEQARDNQYDLEANLACLKLYQFNPQLMNLDVTYVILLKALTNFPHTDFVLCKCLLLPAQMNDDTVKEIIYLADILEKCDFTLFWSRVAKNPPFFKKISGFFDSIRKFVCHVVGITFQSIEKQYLVRLLGDVDDNVLRAWVKKNNWKEDGQYITVAVQEGNIKTKHITEKIDFENLAPLMANCL.

The PCI domain occupies 46–207; that stretch reads YDLEANLACL…NIKTKHITEK (162 aa).

Belongs to the eIF-3 subunit K family. As to quaternary structure, component of the eukaryotic translation initiation factor 3 (eIF-3) complex.

Its subcellular location is the cytoplasm. Component of the eukaryotic translation initiation factor 3 (eIF-3) complex, which is involved in protein synthesis of a specialized repertoire of mRNAs and, together with other initiation factors, stimulates binding of mRNA and methionyl-tRNAi to the 40S ribosome. The eIF-3 complex specifically targets and initiates translation of a subset of mRNAs involved in cell proliferation. The polypeptide is Eukaryotic translation initiation factor 3 subunit K (Aedes aegypti (Yellowfever mosquito)).